Reading from the N-terminus, the 208-residue chain is Large ribosomal subunit protein uL4 (208 aa).

The tract at residues 46 to 97 (QGTHKTKTRAEVRGGGKKPYRQKGTGNARQGSSRSPIMVGGGTIFGPQPRSY) is disordered. Over residues 69-80 (GTGNARQGSSRS) the composition is skewed to polar residues.

The protein belongs to the universal ribosomal protein uL4 family. As to quaternary structure, part of the 50S ribosomal subunit.

Its function is as follows. One of the primary rRNA binding proteins, this protein initially binds near the 5'-end of the 23S rRNA. It is important during the early stages of 50S assembly. It makes multiple contacts with different domains of the 23S rRNA in the assembled 50S subunit and ribosome. Forms part of the polypeptide exit tunnel. The sequence is that of Large ribosomal subunit protein uL4 from Chlorobaculum parvum (strain DSM 263 / NCIMB 8327) (Chlorobium vibrioforme subsp. thiosulfatophilum).